The primary structure comprises 672 residues: Segment polarity protein dishevelled homolog mig-5 (672 aa).

Residues 9–91 (CSQIKVFYYL…GFYEIFLVST (83 aa)) enclose the DIX domain. Disordered stretches follow at residues 97-127 (LPRN…ATPY), 150-174 (YTSN…SSLY), and 187-215 (DDDR…ATES). The span at 98-108 (PRNSGTMTRPQ) shows a compositional bias: polar residues. Positions 160–169 (YDEHTRRTGD) are enriched in basic and acidic residues. The segment covering 191–202 (RRKKQKKERFRR) has biased composition (basic residues). Residues 226 to 294 (EIYLPMKNVP…PQAVRSLREA (69 aa)) form the PDZ domain. The DEP domain occupies 427–501 (PDSGLAVKNR…TEKCYYVFGD (75 aa)). Positions 604–672 (KNNHRQVPAP…SNSRTRILRT (69 aa)) are disordered. The span at 660 to 672 (ENSSNSRTRILRT) shows a compositional bias: polar residues.

This sequence belongs to the DSH family.

The protein localises to the cytoplasm. It localises to the cell cortex. It is found in the cell membrane. Its subcellular location is the cell junction. Functionally, plays a role in the signal transduction pathways mediated by multiple Wnt genes. Functions redundantly with other dishevelled family members throughout development. During embryonic and larval development, controls cell migration and/or cell fate specification of hypodermal cells, hypodermal seam cells, vulval precursor cells and, through distal tip cell migration, somatic gonad precursor cells. In early embryos, regulates the orientation of the mitotic spindle of blastomeres and specifically, along with dsh-2, is required for the correct mitotic spindle orientation of the ABar blastomere division plane. Controls the polarity and the asymmetric localization of downstream components of the wnt/beta-catenin asymmetry pathway, and in particular, controls the asymmetric localization of the wnt receptor lin-17/Frizzled in ectodermal blast B cells. May act redundantly with dsh-2 to regulate the expression and nuclear localization of the beta-catenin homolog wrm-2, but alone seems to be required for the polarity of wrm-2 during the asymmetric cell division of hypodermal seam cells. Also, maintains the polarity and migration of QL neuroblasts in larvae. During the embryonic development of touch receptor neurons, may act redundantly with dsh-1, downstream of wnt signaling ligands and the wnt receptor lin-17/Frizzled, to direct the growth of neurites of touch receptor neurons towards the anterior of the body of the worm and towards the PLM touch receptor neuron and other tail neurons. May play a role in the guidance of posterior D-type motor neuron axons along the anteroposterior axis. In Caenorhabditis elegans, this protein is Segment polarity protein dishevelled homolog mig-5.